Reading from the N-terminus, the 349-residue chain is Terpene cyclase janA (349 aa).

The N-linked (GlcNAc...) asparagine glycan is linked to N80. The next 6 helical transmembrane spans lie at 81–101 (LSLY…VIVL), 116–136 (LAFL…IPAI), 155–175 (IGFY…LAAL), 189–209 (LIAV…IIHY), 223–243 (IACA…LWFA), and 308–328 (VILI…VALL).

The protein belongs to the membrane-bound ascI terpene cyclase family.

The protein localises to the membrane. Its pathway is secondary metabolite biosynthesis. Part of the gene cluster that mediates the biosynthesis of the indole diterpenes janthitremanes such as shearinine K or shearinine A. The geranylgeranyl diphosphate (GGPP) synthase janG catalyzes the first step in janthitremane biosynthesis via conversion of farnesyl pyrophosphate and isopentyl pyrophosphate into geranylgeranyl pyrophosphate (GGPP). Condensation of indole-3-glycerol phosphate with GGPP by the prenyl transferase janC then forms 3-geranylgeranylindole (3-GGI). Epoxidation by the FAD-dependent monooxygenase janM leads to a epoxidized-GGI that is substrate of the terpene cyclase janB for cyclization to yield paspaline. Paspaline is subsequently converted to 13-desoxypaspaline by the cytochrome P450 monooxygenase janP, via beta-PC-M6 in a series of alpha-face oxidations. The cytochrome P450 monooxygenase janQ is proposed to carry out sequential beta-face oxidation steps at C-7 and C-13 of 13-desoxypaspaline to form paspalicine and paspalinine respectively. The indole diterpene prenyltransferase janD may then convert paspalinine into shearinine K which is substrate of janO and/or additional enzymes for oxidation and cyclization to generate shearinine A. This Penicillium janthinellum (Penicillium vitale) protein is Terpene cyclase janA.